Reading from the N-terminus, the 104-residue chain is MTQNWIDAACLDDIPEGDVVGVKVNGKEIALYEVEGEIYATDNLCTHGAARMSDGFLEGREIECPLHQGRFDVCTGKALCTPLTKDIKTYPVKIENMRVMLKME.

Residues 6–101 (IDAACLDDIP…VKIENMRVML (96 aa)) form the Rieske domain. [2Fe-2S] cluster is bound by residues cysteine 45, histidine 47, cysteine 64, and histidine 67.

This sequence belongs to the bacterial ring-hydroxylating dioxygenase ferredoxin component family. Ferredoxin NagAb belongs to both the salicylate 5-hydroxylase (S5H) and the naphthalene 1,2-dioxygenase (NDO) multicomponent enzyme systems. The NDO multicomponent enzyme system is composed of an electron transfer component and a dioxygenase component (iron sulfur protein (ISP)). The electron transfer component is composed of a ferredoxin reductase (NagAa) and a ferredoxin (NagAb), and the dioxygenase component is formed by a large alpha subunit (NagAc) and a small beta subunit (NagAd). The S5H multicomponent enzyme system is composed of an electron transfer component and a monooxygenase component. The electron transfer component is composed of a ferredoxin reductase (NagAa) and a ferredoxin (NagAb), and the monooxygenase component is formed by a large subunit (NagG) and a small subunit (NagH). Requires [2Fe-2S] cluster as cofactor.

Its pathway is aromatic compound metabolism; naphthalene degradation. In terms of biological role, component of two multicomponent enzyme systems which are involved in the catabolism of naphthalene. Plays a role as an electron transfer component for both salicylate 5-hydroxylase (S5H) and naphthalene 1,2-dioxygenase (NDO) systems, by transferring electrons to the oxygenase components. This chain is Naphthalene 1,2-dioxygenase/salicylate 5-hydroxylase systems, ferredoxin component, found in Ralstonia sp.